The following is a 461-amino-acid chain: V-type ATP synthase beta chain (461 aa).

This sequence belongs to the ATPase alpha/beta chains family.

Produces ATP from ADP in the presence of a proton gradient across the membrane. The V-type beta chain is a regulatory subunit. This chain is V-type ATP synthase beta chain, found in Streptococcus pneumoniae (strain CGSP14).